Consider the following 274-residue polypeptide: Transmembrane O-methyltransferase (274 aa).

The helical transmembrane segment at 14–34 (VGTMSPAIALAFLPLVVTLLV) threads the bilayer. Residues glutamate 120, 122 to 123 (GT), serine 128, glutamate 146, and serine 176 contribute to the S-adenosyl-L-methionine site.

It belongs to the class I-like SAM-binding methyltransferase superfamily. Cation-dependent O-methyltransferase family. As to quaternary structure, interacts with LHFPL5, PCDH15, TMC1, TMC2 and TMIE. Interacts directly with TMC1. The interaction of TOMT with TMC1 and TMC2 is required for the transportation of TMC1/2 into the stereocilia of hair cells.

The protein resides in the membrane. The protein localises to the cytoplasm. It localises to the endoplasmic reticulum. It carries out the reaction a catechol + S-adenosyl-L-methionine = a guaiacol + S-adenosyl-L-homocysteine + H(+). In terms of biological role, catalyzes the O-methylation, and thereby the inactivation, of catecholamine neurotransmitters and catechol hormones. Required for auditory function. Component of the cochlear hair cell's mechanotransduction (MET) machinery. Involved in the assembly of the asymmetric tip-link MET complex. Required for transportation of TMC1 and TMC2 proteins into the mechanically sensitive stereocilia of the hair cells. The function in MET is independent of the enzymatic activity. The protein is Transmembrane O-methyltransferase of Propithecus coquereli (Coquerel's sifaka).